The primary structure comprises 207 residues: Small ribosomal subunit protein uS4 (207 aa).

The segment at 33-54 is disordered; that stretch reads KLDSKPGQHGRTSGARTSDYGN. Residues 42-53 show a composition bias toward polar residues; sequence GRTSGARTSDYG. In terms of domain architecture, S4 RNA-binding spans 97 to 157; the sequence is SRLDNVVYRM…EKSKKQVRIA (61 aa).

Belongs to the universal ribosomal protein uS4 family. As to quaternary structure, part of the 30S ribosomal subunit. Contacts protein S5. The interaction surface between S4 and S5 is involved in control of translational fidelity.

Its function is as follows. One of the primary rRNA binding proteins, it binds directly to 16S rRNA where it nucleates assembly of the body of the 30S subunit. Functionally, with S5 and S12 plays an important role in translational accuracy. This is Small ribosomal subunit protein uS4 from Ralstonia pickettii (strain 12J).